We begin with the raw amino-acid sequence, 182 residues long: Ribosome-recycling factor (182 aa).

The protein belongs to the RRF family.

The protein localises to the cytoplasm. Its function is as follows. Responsible for the release of ribosomes from messenger RNA at the termination of protein biosynthesis. May increase the efficiency of translation by recycling ribosomes from one round of translation to another. The polypeptide is Ribosome-recycling factor (Hydrogenobaculum sp. (strain Y04AAS1)).